The following is a 233-amino-acid chain: MSVISMKQLLEAGVHFGHQTRRWNPKMKRYIFTERNGIYIIDLQKTVKKVEEAYRTMRDIAAEGGDILFVGTKKQAQEAIKEEATRAGMYFVNQRWLGGTLTNFQTIQKRIKRLKDIERMQEDGTFEVLPKKEVVQLKKELERLEKFLGGIKDMKGLPSALFVVDPRKERIAVAEARKLHIPIIGIVDTNCDPDEIDHVIPANDDAIRAVKLLTSKMADAILEAKQGEETVTA.

The protein belongs to the universal ribosomal protein uS2 family.

The chain is Small ribosomal subunit protein uS2 from Bacillus cereus (strain G9842).